An 848-amino-acid polypeptide reads, in one-letter code: MDRPQDPFNSRGIAVPPAVKMRNMAGNNSPWIDPLPPPMNARNGLANASLFSTSLPVLPHEKINFLDSARGTPLMDDASAKLKELDDDPEGKDYKFDFDLRQIDDLLPNEDDLFAGITNEIEPAGQTNSMEELEEFDVFGSGGGMELDTDPVESITAGLGNTSIADGLRGNGVNHFGPSNSASTVAGEHPYGEHPSRTLFVRNINSNVDDTELRSLFEQYGDIRTLYTATKHRGFVMISYFDIRAARGAMRGLQNKPLRRRKLDIHFSIPKENPSDKDLNQGTLVIFNLDPSVSNEEVRQIFGTYGEVKEIRETPNKKHHKFIEFYDVRAAEAALRSLNKSEIAGKRIKLEPSRPGGTRRNLMQQLGHDIDQDEPRSYRIPHVGSPIASSPPGAWAQYSSPTDNNLLQAFNASPTGNGMSPIGMPPSLISNAVKIAPIGKDSNWSKYDKVFSNNNQPHGAAFQHSHSYQDHKSEHMSSSPGTLTGPEFLWGSPKPYSEHAQSPIWRPPAIGHAIPSNTRSQGQGLLYGGRQASLFGSQDQLHHHHVGSAPSGAPFESHFGFLPESPETSYMNQVRFGNIGNIGSGRNGTGLMLNMAARASVNPVSALSGNMSDNNSSSFRPILSPRLGQSFYGNPTYQGPGSFGLDNSIERGRNRRVDSSVFQADSKKQYQLDLEKIRKGDDTRTTLMIKNIPNKYTSKMLLAAIDEFHKGTYDFFYLPIDFKNKCNVGYAFINMISPVHIVSFYQAFNGKKWEKFNSEKVASLAYARIQGRTALISHFQNSSLMNEDKRCRPILFHSNGPDAGNQEPFPINGICIHMPLEDGAIATGDPFGNEEDNNQNERTAGEEL.

RRM domains follow at residues 197–270 (RTLF…FSIP) and 282–355 (GTLV…PSRP). Disordered stretches follow at residues 370–400 (IDQD…QYSS), 455–523 (NQPH…SQGQ), and 826–848 (ATGD…GEEL).

Probable RNA-binding protein that may play a role in growth regulation. The polypeptide is Protein MEI2-like 2 (ML2) (Oryza sativa subsp. japonica (Rice)).